Reading from the N-terminus, the 291-residue chain is 3-hydroxy-5-phosphonooxypentane-2,4-dione thiolase (291 aa).

Lys-203 serves as the catalytic Schiff-base intermediate with substrate.

This sequence belongs to the DeoC/FbaB aldolase family. As to quaternary structure, homodecamer.

Its subcellular location is the cytoplasm. The enzyme catalyses dihydroxyacetone phosphate + acetyl-CoA = 3-hydroxy-2,4-dioxopentyl phosphate + CoA. In terms of biological role, involved in the degradation of phospho-AI-2, thereby terminating induction of the lsr operon and closing the AI-2 signaling cycle. Catalyzes the transfer of an acetyl moiety from 3-hydroxy-5-phosphonooxypentane-2,4-dione to CoA to form glycerone phosphate and acetyl-CoA. The sequence is that of 3-hydroxy-5-phosphonooxypentane-2,4-dione thiolase from Escherichia coli (strain K12 / DH10B).